The chain runs to 553 residues: Adenine deaminase (553 aa).

The protein belongs to the metallo-dependent hydrolases superfamily. Adenine deaminase family. Mn(2+) serves as cofactor.

It catalyses the reaction adenine + H2O + H(+) = hypoxanthine + NH4(+). This Methanosarcina acetivorans (strain ATCC 35395 / DSM 2834 / JCM 12185 / C2A) protein is Adenine deaminase.